Reading from the N-terminus, the 322-residue chain is MKIVVLDGYCLNPGDLDWKGLEALGECIVYDRTSLTDMEEVISRIGDADIVYTNKTPMPREVFEKCPNIRFVGVLATGYNVVDVNTAKEKGIPVANIPTYGTASVGQFAIALLLEICHHVGHHNQVVHEGKWESNPDWCFWDYPLIELDGKNMGIIGYGRIGQATGKIAQALGMKVLAYDAYKNPALENENCRYVELDELLSQSDVIALHCPLFPETEGIVNKENIAKMKDGVIILNNSRGPLIVEQDLVDALNSGKVAAAGLDVVSTEPIKGDNPLLGAKNCIITPHISWAPKESRKRLMDIAVNNLEEFLKGSPVNVVNK.

NAD(+)-binding positions include 160 to 161 (RI), D180, 211 to 212 (CP), 238 to 240 (NSR), and D264. Residue R240 is part of the active site. E269 is an active-site residue. Residue H288 is the Proton donor of the active site.

This sequence belongs to the D-isomer specific 2-hydroxyacid dehydrogenase family.

It catalyses the reaction (R)-glycerate + NAD(+) = 3-hydroxypyruvate + NADH + H(+). It functions in the pathway carbohydrate metabolism. Its function is as follows. Involved in catabolism of D-apiose. Catalyzes the reduction of 3-hydroxypyruvate to glycerate. The polypeptide is Hydroxypyruvate reductase (Blautia hydrogenotrophica (strain DSM 10507 / JCM 14656 / S5a33) (Ruminococcus hydrogenotrophicus)).